The chain runs to 429 residues: Adenylosuccinate synthetase (429 aa).

GTP contacts are provided by residues 12–18 (GDEGKGK) and 40–42 (GHT). Residue Asp-13 is the Proton acceptor of the active site. Mg(2+)-binding residues include Asp-13 and Gly-40. IMP is bound by residues 13-16 (DEGK), 38-41 (NAGH), Thr-129, Arg-143, Gln-223, Thr-238, and Arg-302. His-41 (proton donor) is an active-site residue. Residue 298–304 (TVTGRKR) participates in substrate binding. GTP is bound by residues Arg-304, 330–332 (KLD), and 412–414 (STS).

This sequence belongs to the adenylosuccinate synthetase family. In terms of assembly, homodimer. The cofactor is Mg(2+).

The protein resides in the cytoplasm. It carries out the reaction IMP + L-aspartate + GTP = N(6)-(1,2-dicarboxyethyl)-AMP + GDP + phosphate + 2 H(+). The protein operates within purine metabolism; AMP biosynthesis via de novo pathway; AMP from IMP: step 1/2. In terms of biological role, plays an important role in the de novo pathway of purine nucleotide biosynthesis. Catalyzes the first committed step in the biosynthesis of AMP from IMP. In Rhizorhabdus wittichii (strain DSM 6014 / CCUG 31198 / JCM 15750 / NBRC 105917 / EY 4224 / RW1) (Sphingomonas wittichii), this protein is Adenylosuccinate synthetase.